We begin with the raw amino-acid sequence, 257 residues long: Uxu operon transcriptional regulator (257 aa).

In terms of domain architecture, HTH gntR-type spans 8–76 (QRPYQEVGAM…RGAGIYVLDN (69 aa)). The H-T-H motif DNA-binding region spans 36-55 (EREIAEMLDVTRTVVREALI).

In terms of biological role, repressor for the uxuRBA operon. In Escherichia coli (strain K12), this protein is Uxu operon transcriptional regulator (uxuR).